A 250-amino-acid polypeptide reads, in one-letter code: Sperm-egg fusion protein Juno (250 aa).

An N-terminal signal peptide occupies residues 1 to 19 (MACWWPLLLELWTVMPTWA). Disulfide bonds link C27-C55, C47-C95, C56-C99, C79-C172, C86-C143, C132-C206, C136-C186, and C149-C166. The segment at 62-81 (WEAHLDVSPLYNFSLFHCGL) is important for interaction with IZUMO1. The N-linked (GlcNAc...) asparagine glycan is linked to N73. S228 carries GPI-anchor amidated serine lipidation. Residues 229–250 (SAPSWELSYTIMVCSLFLPFLS) constitute a propeptide that is removed on maturation.

It belongs to the folate receptor family. Monomer. Interacts with IZUMO1; the interaction is direct. IZUMO1 and IZUMO1R/JUNO form a complex with 1:1 stoichiometry. Interacts with FCRL3/MAIA; FCRL3/MAIA replaces IZUMO1R/JUNO as IZUMO1 receptor after sperm-egg adhesion, thereby permitting species-specific gamete fusion. Interacts with WDR54. In terms of processing, the protein is rapidly cleaved following fertilization, being only weakly detectable in zona-intact fertilized eggs at telophase II and undetectable at the pronuclear stage. Sheding is probably required to block to polyspermy and ensuring egg fusion with a single sperm. As to expression, expressed in unfertilized oocytes (at protein level).

It is found in the cell membrane. The protein localises to the cell projection. It localises to the microvillus membrane. Receptor for IZUMO1 present at the cell surface of oocytes (oolemma), which is essential for species-specific gamete recognition and fertilization. The IZUMO1:IZUMO1R/JUNO interaction is a necessary adhesion event between sperm and egg that is required for fertilization but is not sufficient for cell fusion. The ligand-receptor interaction probably does not act as a membrane 'fusogen'. Does not bind folate. The chain is Sperm-egg fusion protein Juno from Homo sapiens (Human).